The sequence spans 70 residues: UPF0337 protein BT9727_3385 (70 aa).

Belongs to the UPF0337 (CsbD) family.

In Bacillus thuringiensis subsp. konkukian (strain 97-27), this protein is UPF0337 protein BT9727_3385.